The sequence spans 483 residues: Cobyric acid synthase (483 aa).

In terms of domain architecture, GATase cobBQ-type spans 251-438 (ALIVAVPMLP…LHGVFSADRF (188 aa)). The active-site Nucleophile is cysteine 333. Residue histidine 430 is part of the active site.

The protein belongs to the CobB/CobQ family. CobQ subfamily.

The protein operates within cofactor biosynthesis; adenosylcobalamin biosynthesis. Its function is as follows. Catalyzes amidations at positions B, D, E, and G on adenosylcobyrinic A,C-diamide. NH(2) groups are provided by glutamine, and one molecule of ATP is hydrogenolyzed for each amidation. This is Cobyric acid synthase from Brucella suis (strain ATCC 23445 / NCTC 10510).